A 457-amino-acid polypeptide reads, in one-letter code: Adenylosuccinate synthetase isozyme 1 (457 aa).

Residues 1 to 21 (MSGTRASNDRPPGAGGVKRGR) form a disordered region. Residues 42–48 (GDEGKGK) and 70–72 (GHT) contribute to the GTP site. Asp43 serves as the catalytic Proton acceptor. Asp43 and Gly70 together coordinate Mg(2+). Residue Asp43 participates in substrate binding. Residues 43-46 (DEGK), 68-71 (NAGH), Thr163, Arg177, Asn256, Thr271, and Arg335 contribute to the IMP site. His71 serves as the catalytic Proton donor. 331 to 337 (VTTGRKR) serves as a coordination point for substrate. GTP is bound by residues Arg337, 363–365 (KLD), and 445–448 (GVGK).

Belongs to the adenylosuccinate synthetase family. Homodimer. Requires Mg(2+) as cofactor. Predominantly expressed in skeletal muscle and heart, as well as in several hematopoietic cell lines and solid tumors.

It is found in the cytoplasm. It catalyses the reaction IMP + L-aspartate + GTP = N(6)-(1,2-dicarboxyethyl)-AMP + GDP + phosphate + 2 H(+). It functions in the pathway purine metabolism; AMP biosynthesis via de novo pathway; AMP from IMP: step 1/2. Its function is as follows. Component of the purine nucleotide cycle (PNC), which interconverts IMP and AMP to regulate the nucleotide levels in various tissues, and which contributes to glycolysis and ammoniagenesis. Catalyzes the first committed step in the biosynthesis of AMP from IMP. In Homo sapiens (Human), this protein is Adenylosuccinate synthetase isozyme 1.